Consider the following 725-residue polypeptide: Palmitoyltransferase AKR1 (725 aa).

Residues 1 to 303 (MGTIAMASIN…LKDKRSFVTR (303 aa)) are Cytoplasmic-facing. ANK repeat units follow at residues 84–113 (EGIT…EINR), 118–147 (SIAT…DPLV), 151–180 (QGYN…PVDV), 184–213 (FGHT…SVHA), and 217–246 (QGFT…DRFA). Residues 304 to 324 (FLFFWPFVLVWAMLVAMSSAP) form a helical membrane-spanning segment. The Lumenal segment spans residues 325 to 326 (VY). The chain crosses the membrane as a helical span at residues 327–347 (IGVPLGIAAVYAIQWVAQQVL). The Cytoplasmic portion of the chain corresponds to 348–364 (EYAPSDMRHFHKTPWLT). A helical transmembrane segment spans residues 365–385 (GIFAATLFWTGVNWLTTVLFA). The Lumenal portion of the chain corresponds to 386–397 (TTLGAPEGKGHG). A helical transmembrane segment spans residues 398-418 (ILNFLFALFFGFTVYFYIASM). At 419–495 (RYDPGFVPKM…NCVGINNHRH (77 aa)) the chain is on the cytoplasmic side. A DHHC domain is found at 451-501 (NFCVTCMIQTPLRSKHCRRCQRCVAKHDHHCPWVYNCVGINNHRHFFFYLI). The active-site S-palmitoyl cysteine intermediate is the Cys481. The helical transmembrane segment at 496-516 (FFFYLISLTMGIVSYDFLLYY) threads the bilayer. Residues 517–547 (YFDTVSKNASETCNVLSPTLCKYINADSYTS) are Lumenal-facing. Residues 548-568 (ILAIWITMQLLWVTMLLFTQF) traverse the membrane as a helical segment. Topologically, residues 569 to 725 (IQVARAMTTY…YEAVGTEDVV (157 aa)) are cytoplasmic.

This sequence belongs to the DHHC palmitoyltransferase family. AKR/ZDHHC17 subfamily.

The protein localises to the early endosome membrane. It is found in the golgi apparatus membrane. The catalysed reaction is L-cysteinyl-[protein] + hexadecanoyl-CoA = S-hexadecanoyl-L-cysteinyl-[protein] + CoA. Functionally, palmitoyltransferase specific for casein kinase 1. The chain is Palmitoyltransferase AKR1 (AKR1) from Gibberella zeae (strain ATCC MYA-4620 / CBS 123657 / FGSC 9075 / NRRL 31084 / PH-1) (Wheat head blight fungus).